We begin with the raw amino-acid sequence, 240 residues long: Biosynthetic peptidoglycan transglycosylase (240 aa).

Residues 12–31 form a helical membrane-spanning segment; that stretch reads ALMWFMVGSVLLVLLLRFVP.

The protein belongs to the glycosyltransferase 51 family.

The protein localises to the cell inner membrane. It carries out the reaction [GlcNAc-(1-&gt;4)-Mur2Ac(oyl-L-Ala-gamma-D-Glu-L-Lys-D-Ala-D-Ala)](n)-di-trans,octa-cis-undecaprenyl diphosphate + beta-D-GlcNAc-(1-&gt;4)-Mur2Ac(oyl-L-Ala-gamma-D-Glu-L-Lys-D-Ala-D-Ala)-di-trans,octa-cis-undecaprenyl diphosphate = [GlcNAc-(1-&gt;4)-Mur2Ac(oyl-L-Ala-gamma-D-Glu-L-Lys-D-Ala-D-Ala)](n+1)-di-trans,octa-cis-undecaprenyl diphosphate + di-trans,octa-cis-undecaprenyl diphosphate + H(+). It functions in the pathway cell wall biogenesis; peptidoglycan biosynthesis. Its function is as follows. Peptidoglycan polymerase that catalyzes glycan chain elongation from lipid-linked precursors. This is Biosynthetic peptidoglycan transglycosylase from Pseudomonas fluorescens (strain ATCC BAA-477 / NRRL B-23932 / Pf-5).